The chain runs to 158 residues: Small ribosomal subunit protein uS7 (158 aa).

This sequence belongs to the universal ribosomal protein uS7 family. Part of the 30S ribosomal subunit. Contacts proteins S9 and S11.

In terms of biological role, one of the primary rRNA binding proteins, it binds directly to 16S rRNA where it nucleates assembly of the head domain of the 30S subunit. Is located at the subunit interface close to the decoding center, probably blocks exit of the E-site tRNA. This chain is Small ribosomal subunit protein uS7, found in Christiangramia forsetii (strain DSM 17595 / CGMCC 1.15422 / KT0803) (Gramella forsetii).